Consider the following 321-residue polypeptide: Protein ABIL3 (321 aa).

Disordered regions lie at residues threonine 179 to serine 273 and glutamate 279 to leucine 298. Low complexity-rich tracts occupy residues serine 204–alanine 215 and isoleucine 240–arginine 255. Over residues glutamate 279–histidine 288 the composition is skewed to basic and acidic residues.

This sequence belongs to the ABI family. Binds SCAR.

It localises to the cytoplasm. The protein localises to the cytoskeleton. Involved in regulation of actin and microtubule organization. Part of a WAVE complex that activates the Arp2/3 complex. The polypeptide is Protein ABIL3 (ABIL3) (Arabidopsis thaliana (Mouse-ear cress)).